The following is a 497-amino-acid chain: Serine hydroxymethyltransferase (497 aa).

Residues Leu-176 and 180–182 contribute to the (6S)-5,6,7,8-tetrahydrofolate site; that span reads GHL. Lys-289 bears the N6-(pyridoxal phosphate)lysine mark.

The protein belongs to the SHMT family. As to quaternary structure, homodimer. Pyridoxal 5'-phosphate serves as cofactor.

It localises to the cytoplasm. The enzyme catalyses (6R)-5,10-methylene-5,6,7,8-tetrahydrofolate + glycine + H2O = (6S)-5,6,7,8-tetrahydrofolate + L-serine. It functions in the pathway one-carbon metabolism; tetrahydrofolate interconversion. The protein operates within amino-acid biosynthesis; glycine biosynthesis; glycine from L-serine: step 1/1. Its function is as follows. Catalyzes the reversible interconversion of serine and glycine with tetrahydrofolate (THF) serving as the one-carbon carrier. This reaction serves as the major source of one-carbon groups required for the biosynthesis of purines, thymidylate, methionine, and other important biomolecules. Also exhibits THF-independent aldolase activity toward beta-hydroxyamino acids, producing glycine and aldehydes, via a retro-aldol mechanism. This chain is Serine hydroxymethyltransferase, found in Chlamydia muridarum (strain MoPn / Nigg).